The following is a 379-amino-acid chain: Putative glutamate--cysteine ligase 2 (379 aa).

The protein belongs to the glutamate--cysteine ligase type 2 family. YbdK subfamily.

The catalysed reaction is L-cysteine + L-glutamate + ATP = gamma-L-glutamyl-L-cysteine + ADP + phosphate + H(+). Functionally, ATP-dependent carboxylate-amine ligase which exhibits weak glutamate--cysteine ligase activity. This is Putative glutamate--cysteine ligase 2 from Mycobacterium avium (strain 104).